A 153-amino-acid chain; its full sequence is Superoxide dismutase [Cu-Zn] (153 aa).

Residues His46, His48, and His63 each contribute to the Cu cation site. Cys57 and Cys146 are joined by a disulfide. Positions 61-80 (GPHFNPFGKEHGAPEDENRH) are disordered. Residues His63, His71, His80, and Asp83 each coordinate Zn(2+). The segment covering 68–80 (GKEHGAPEDENRH) has biased composition (basic and acidic residues). Position 120 (His120) interacts with Cu cation. Residues 124–136 (DDLGRSEHPESKK) are compositionally biased toward basic and acidic residues. The tract at residues 124–143 (DDLGRSEHPESKKTGNAGAR) is disordered. Residue Arg143 coordinates substrate.

The protein belongs to the Cu-Zn superoxide dismutase family. In terms of assembly, homodimer. Cu cation serves as cofactor. Requires Zn(2+) as cofactor.

Its subcellular location is the cytoplasm. The catalysed reaction is 2 superoxide + 2 H(+) = H2O2 + O2. Destroys radicals which are normally produced within the cells and which are toxic to biological systems. The chain is Superoxide dismutase [Cu-Zn] (sodC) from Aspergillus flavus.